The chain runs to 100 residues: Non-histone chromosomal protein HMG-14 (100 aa).

Positions 1–100 (MPKRKVSSAE…EAGEKEAKSD (100 aa)) are disordered. An ADP-ribosylserine modification is found at Ser-7. Residue Ser-8 is modified to Phosphoserine. Residue Lys-14 is modified to N6-acetyllysine. Ser-21 carries the post-translational modification Phosphoserine; by RPS6KA5. Ser-25 carries the ADP-ribosylserine; alternate modification. Ser-25 carries the post-translational modification Phosphoserine; alternate; by RPS6KA5. Lys-27 bears the N6-acetyllysine mark. Basic and acidic residues-rich tracts occupy residues 30–50 (AKVE…DKKV) and 69–85 (ETKE…KTEE). A Phosphothreonine modification is found at Thr-81. Lys-82 carries the post-translational modification N6-acetyllysine. A phosphoserine mark is found at Ser-86, Ser-89, and Ser-99.

As to quaternary structure, interacts with transcriptional regulator SEHBP. Phosphorylation on Ser-21 and Ser-25 weakens binding to nucleosomes and increases the rate of H3 phosphorylation. Phosphorylation favors cytoplasmic localization.

It localises to the nucleus. Its subcellular location is the cytoplasm. Functionally, binds to the inner side of the nucleosomal DNA thus altering the interaction between the DNA and the histone octamer. May be involved in the process which maintains transcribable genes in a unique chromatin conformation. Inhibits the phosphorylation of nucleosomal histones H3 and H2A by RPS6KA5/MSK1 and RPS6KA3/RSK2. This is Non-histone chromosomal protein HMG-14 (HMGN1) from Homo sapiens (Human).